The primary structure comprises 90 residues: Probable Fe(2+)-trafficking protein (90 aa).

The protein belongs to the Fe(2+)-trafficking protein family.

Functionally, could be a mediator in iron transactions between iron acquisition and iron-requiring processes, such as synthesis and/or repair of Fe-S clusters in biosynthetic enzymes. This chain is Probable Fe(2+)-trafficking protein, found in Pseudomonas putida (strain W619).